The sequence spans 451 residues: Photosystem II CP43 reaction center protein (451 aa).

The Cytoplasmic portion of the chain corresponds to 1-46 (ATNRDQESSGFAWWAGNARLINLSGKLLGAHVAHAGLIVFWAGAMT). Residues tryptophan 13, leucine 27, and alanine 30 each coordinate chlorophyll a. The helical transmembrane segment at 47–71 (LFELAHFIPEKPMYEQGLILIPHIA) threads the bilayer. The Lumenal portion of the chain corresponds to 72–111 (TLGWGVGPGGEVVDTFPFFVVGVVHLISSAVLGFGGVYHA). Positions 92 and 106 each coordinate chlorophyll a. Residues 112–133 (IRGPETLEEYSSFFGYDWKDKN) form a helical membrane-spanning segment. Over 134–155 (KMTTILGFHLIVLGIGALLLVA) the chain is Cytoplasmic. Residue isoleucine 138 coordinates chlorophyll a. The helical transmembrane segment at 156-178 (KAMFFGGLYDTWAPGGGDVRVIT) threads the bilayer. Topologically, residues 179 to 232 (NPTLDPRVIFGYLLKSPFGGEGWIVSVNNLEDVVGGHIWIGLICIAGGIWHILT) are lumenal. Valine 211 and glycine 225 together coordinate chlorophyll a. Residues 233–253 (TPFGWARRAFIWSGEAYLSYS) traverse the membrane as a helical segment. The Cytoplasmic portion of the chain corresponds to 254–268 (LGALSMMGFIATCFV). Residues 269-290 (WFNNTVYPSEFYGPTGPEASQA) traverse the membrane as a helical segment. Over 291 to 424 (QAMTFLIRDQ…FLVGHLWHAG (134 aa)) the chain is Lumenal. Residue glutamate 345 participates in [CaMn4O5] cluster binding. Leucine 404, phenylalanine 415, and glycine 418 together coordinate chlorophyll a. Residues 425–449 (RARAAAAGFEKGIDRESEPVLSMPS) form a helical membrane-spanning segment. The Cytoplasmic segment spans residues 450-451 (LD).

This sequence belongs to the PsbB/PsbC family. PsbC subfamily. PSII is composed of 1 copy each of membrane proteins PsbA, PsbB, PsbC, PsbD, PsbE, PsbF, PsbH, PsbI, PsbJ, PsbK, PsbL, PsbM, PsbT, PsbX, PsbY, PsbZ, Psb30/Ycf12, peripheral proteins PsbO, CyanoQ (PsbQ), PsbU, PsbV and a large number of cofactors. It forms dimeric complexes. Binds multiple chlorophylls and provides some of the ligands for the Ca-4Mn-5O cluster of the oxygen-evolving complex. It may also provide a ligand for a Cl- that is required for oxygen evolution. PSII binds additional chlorophylls, carotenoids and specific lipids. is required as a cofactor.

Its subcellular location is the cellular thylakoid membrane. In terms of biological role, one of the components of the core complex of photosystem II (PSII). It binds chlorophyll and helps catalyze the primary light-induced photochemical processes of PSII. PSII is a light-driven water:plastoquinone oxidoreductase, using light energy to abstract electrons from H(2)O, generating O(2) and a proton gradient subsequently used for ATP formation. The sequence is that of Photosystem II CP43 reaction center protein from Thermostichus vulcanus (Synechococcus vulcanus).